We begin with the raw amino-acid sequence, 1464 residues long: Nuclear pore complex protein NUP155 (1464 aa).

N-acetylserine is present on S2.

This sequence belongs to the non-repetitive/WGA-negative nucleoporin family. Part of the nuclear pore complex (NPC). The NPC has an eight-fold symmetrical structure comprising a central transport channel and two rings, the cytoplasmic and nuclear rings, to which eight filaments are attached. The cytoplasmic filaments have loose ends, while the nuclear filaments are joined in a distal ring, forming a nuclear basket. NPCs are highly dynamic in configuration and composition, and can be devided in 3 subcomplexes, the NUP62 subcomplex, the NUP107-160 subcomplex and the NUP93 subcomplex, containing approximately 30 different nucleoporin proteins.

Its subcellular location is the nucleus. The protein resides in the nuclear pore complex. Its function is as follows. Major component of the nuclear pore complex (NPC). The chain is Nuclear pore complex protein NUP155 from Arabidopsis thaliana (Mouse-ear cress).